Here is a 601-residue protein sequence, read N- to C-terminus: Probable translation initiation factor IF-2 (601 aa).

The tr-type G domain maps to 14–229 (LRTPIVAVLG…VMMGLSQRYM (216 aa)). The segment at 23–30 (GHVDHGKT) is G1. GTP is bound at residue 23–30 (GHVDHGKT). Positions 48 to 52 (AITQH) are G2. The tract at residues 85-88 (DTPG) is G3. Residues 85-89 (DTPGH) and 139-142 (NKID) contribute to the GTP site. The interval 139 to 142 (NKID) is G4. The interval 207–209 (SAE) is G5.

The protein belongs to the TRAFAC class translation factor GTPase superfamily. Classic translation factor GTPase family. IF-2 subfamily.

Function in general translation initiation by promoting the binding of the formylmethionine-tRNA to ribosomes. Seems to function along with eIF-2. This chain is Probable translation initiation factor IF-2, found in Haloarcula marismortui (strain ATCC 43049 / DSM 3752 / JCM 8966 / VKM B-1809) (Halobacterium marismortui).